Reading from the N-terminus, the 93-residue chain is Cytochrome c oxidase polypeptide 6, mitochondrial (93 aa).

Residues 2-33 are Mitochondrial matrix-facing; that stretch reads STGNESYNLRYPKGFKGYPYNMYKLEGYGTPK. A helical membrane pass occupies residues 34–53; that stretch reads GYITLIGVVATLTVSGLFFA. The Mitochondrial intermembrane portion of the chain corresponds to 54-93; the sequence is KTRSNKREYPTHNKEWRAKTLAYAKETNADPIYQLPKDKI.

The protein belongs to the cytochrome c oxidase IV family. Component of the cytochrome c oxidase (complex IV, CIV), a multisubunit enzyme composed of a catalytic core of 3 subunits and seevral supernumerary subunits. The complex exists as a monomer or a dimer and forms supercomplexes (SCs) in the inner mitochondrial membrane with ubiquinol-cytochrome c oxidoreductase (cytochrome b-c1 complex, complex III, CIII).

The protein localises to the mitochondrion inner membrane. It functions in the pathway energy metabolism; oxidative phosphorylation. In terms of biological role, component of the cytochrome c oxidase, the last enzyme in the mitochondrial electron transport chain which drives oxidative phosphorylation. The respiratory chain contains 3 multisubunit complexes succinate dehydrogenase (complex II, CII), ubiquinol-cytochrome c oxidoreductase (cytochrome b-c1 complex, complex III, CIII) and cytochrome c oxidase (complex IV, CIV), that cooperate to transfer electrons derived from NADH and succinate to molecular oxygen, creating an electrochemical gradient over the inner membrane that drives transmembrane transport and the ATP synthase. Cytochrome c oxidase is the component of the respiratory chain that catalyzes the reduction of oxygen to water. Electrons originating from reduced cytochrome c in the intermembrane space (IMS) are transferred via the dinuclear copper A center (CU(A)) of subunit 2 and heme A of subunit 1 to the active site in subunit 1, a binuclear center (BNC) formed by heme A3 and copper B (CU(B)). The BNC reduces molecular oxygen to 2 water molecules using 4 electrons from cytochrome c in the IMS and 4 protons from the mitochondrial matrix. This chain is Cytochrome c oxidase polypeptide 6, mitochondrial (cxfA), found in Dictyostelium discoideum (Social amoeba).